Consider the following 189-residue polypeptide: UPF0398 protein lhv_1265 (189 aa).

Belongs to the UPF0398 family.

This Lactobacillus helveticus (strain DPC 4571) protein is UPF0398 protein lhv_1265.